Consider the following 268-residue polypeptide: TATA-box-binding protein (268 aa).

The segment covering 1–24 (MDSLTTHPATAQQARAFTSPSSLS) has biased composition (polar residues). Positions 1–86 (MDSLTTHPAT…TPAATPGASA (86 aa)) are disordered. A compositionally biased stretch (low complexity) spans 50-86 (NGQSANGNVNGQQQGANAANGNGVMPATPAATPGASA). Repeat copies occupy residues 95-171 (LQNI…ARII) and 185-262 (IQNI…YPVL).

The protein belongs to the TBP family. In terms of assembly, belongs to the TFIID complex together with the TBP-associated factors (TAFs). Binds DNA as monomer.

The protein resides in the nucleus. In terms of biological role, general transcription factor that functions at the core of the DNA-binding multiprotein factor TFIID. Binding of TFIID to the TATA box is the initial transcriptional step of the pre-initiation complex (PIC), playing a role in the activation of eukaryotic genes transcribed by RNA polymerase II. This is TATA-box-binding protein (tbpA) from Emericella nidulans (strain FGSC A4 / ATCC 38163 / CBS 112.46 / NRRL 194 / M139) (Aspergillus nidulans).